The sequence spans 553 residues: Dihydrolipoyllysine-residue acetyltransferase component of pyruvate dehydrogenase complex (553 aa).

In terms of domain architecture, Lipoyl-binding 1 spans 4 to 78 (AIEIKVPDIG…SEGSVLVMLE (75 aa)). At Lys-44 the chain carries N6-lipoyllysine. The tract at residues 97–118 (AAAAPAPAPAPAAAPAAAPAAG) is disordered. Positions 122–196 (TIEVKVPDIG…AEGTLLLILE (75 aa)) constitute a Lipoyl-binding 2 domain. Lys-162 carries the N6-lipoyllysine modification. A Peripheral subunit-binding (PSBD) domain is found at 250–287 (HASPSVRKFARELGVDVSRVPGTGPKGRITQEDVQGYV). The active site involves His-526.

The protein belongs to the 2-oxoacid dehydrogenase family. As to quaternary structure, forms a 24-polypeptide structural core with octahedral symmetry. (R)-lipoate is required as a cofactor.

The enzyme catalyses N(6)-[(R)-dihydrolipoyl]-L-lysyl-[protein] + acetyl-CoA = N(6)-[(R)-S(8)-acetyldihydrolipoyl]-L-lysyl-[protein] + CoA. In terms of biological role, the pyruvate dehydrogenase complex catalyzes the overall conversion of pyruvate to acetyl-CoA and CO(2). It contains multiple copies of three enzymatic components: pyruvate dehydrogenase (E1), dihydrolipoamide acetyltransferase (E2) and lipoamide dehydrogenase (E3). This is Dihydrolipoyllysine-residue acetyltransferase component of pyruvate dehydrogenase complex (pdhB) from Cupriavidus necator (strain ATCC 17699 / DSM 428 / KCTC 22496 / NCIMB 10442 / H16 / Stanier 337) (Ralstonia eutropha).